A 482-amino-acid polypeptide reads, in one-letter code: Adenylyltransferase and sulfurtransferase uba4 (482 aa).

Positions glutamate 33 to serine 57 are disordered. Positions alanine 39–arginine 54 are enriched in polar residues. ATP is bound by residues glycine 98, aspartate 119, serine 126–arginine 130, lysine 143, and aspartate 187–asparagine 188. Residues cysteine 236 and cysteine 239 each contribute to the Zn(2+) site. Residue cysteine 253 is the Glycyl thioester intermediate; for adenylyltransferase activity of the active site. 2 residues coordinate Zn(2+): cysteine 315 and cysteine 318. A Rhodanese domain is found at alanine 366–proline 480. Cysteine 435 acts as the Cysteine persulfide intermediate; for sulfurtransferase activity in catalysis.

The protein in the N-terminal section; belongs to the HesA/MoeB/ThiF family. UBA4 subfamily. The cofactor is Zn(2+).

It is found in the cytoplasm. The protein resides in the cytosol. The enzyme catalyses [molybdopterin-synthase sulfur-carrier protein]-C-terminal Gly-Gly + ATP + H(+) = [molybdopterin-synthase sulfur-carrier protein]-C-terminal Gly-Gly-AMP + diphosphate. It carries out the reaction [molybdopterin-synthase sulfur-carrier protein]-C-terminal Gly-Gly-AMP + S-sulfanyl-L-cysteinyl-[cysteine desulfurase] + AH2 = [molybdopterin-synthase sulfur-carrier protein]-C-terminal-Gly-aminoethanethioate + L-cysteinyl-[cysteine desulfurase] + A + AMP + 2 H(+). Its pathway is tRNA modification; 5-methoxycarbonylmethyl-2-thiouridine-tRNA biosynthesis. The protein operates within cofactor biosynthesis; molybdopterin biosynthesis. Functionally, plays a central role in 2-thiolation of mcm(5)S(2)U at tRNA wobble positions of cytosolic tRNA(Lys), tRNA(Glu) and tRNA(Gln). Also essential during biosynthesis of the molybdenum cofactor. Acts by mediating the C-terminal thiocarboxylation of sulfur carriers urm1 and mocs2a. Its N-terminus first activates urm1 and mocs2a as acyl-adenylates (-COAMP), then the persulfide sulfur on the catalytic cysteine is transferred to urm1 and mocs2a to form thiocarboxylation (-COSH) of their C-terminus. The reaction probably involves hydrogen sulfide that is generated from the persulfide intermediate and that acts as a nucleophile towards urm1 and mocs2a. Subsequently, a transient disulfide bond is formed. Does not use thiosulfate as sulfur donor; nfs1 probably acting as a sulfur donor for thiocarboxylation reactions. The sequence is that of Adenylyltransferase and sulfurtransferase uba4 from Emericella nidulans (strain FGSC A4 / ATCC 38163 / CBS 112.46 / NRRL 194 / M139) (Aspergillus nidulans).